Consider the following 156-residue polypeptide: Small ribosomal subunit protein uS7 (156 aa).

It belongs to the universal ribosomal protein uS7 family. In terms of assembly, part of the 30S ribosomal subunit. Contacts proteins S9 and S11.

One of the primary rRNA binding proteins, it binds directly to 16S rRNA where it nucleates assembly of the head domain of the 30S subunit. Is located at the subunit interface close to the decoding center, probably blocks exit of the E-site tRNA. The chain is Small ribosomal subunit protein uS7 from Frankia casuarinae (strain DSM 45818 / CECT 9043 / HFP020203 / CcI3).